A 243-amino-acid polypeptide reads, in one-letter code: MIAPRIALQFLTRLPVSLPGMPTPEQIGRSLLWYPAVGLLLGLLLWLAHLLLGQTPDVLQAAIILALWVGLSGGLHLDGLADTADAWVGGFGDPGRTLAIMKDPRSGPIAVVVLVLLLLLKFAALLSLLQAGQGIYLVLLPWLGRSLLPLLLATTPYVRAGGLGQALVDHLPRRQLPWVLGGHVAAMLLLGWGALIALATALALFVWLRRALMQRLGGTTGDTAGALLELAECAALLALALSL.

The next 5 membrane-spanning stretches (helical) occupy residues 31–51 (LLWY…AHLL), 61–81 (AAII…DGLA), 109–129 (IAVV…LSLL), 134–154 (GIYL…LLAT), and 188–208 (LLLG…FVWL).

Belongs to the CobS family. It depends on Mg(2+) as a cofactor.

Its subcellular location is the cell inner membrane. The enzyme catalyses alpha-ribazole + adenosylcob(III)inamide-GDP = adenosylcob(III)alamin + GMP + H(+). It catalyses the reaction alpha-ribazole 5'-phosphate + adenosylcob(III)inamide-GDP = adenosylcob(III)alamin 5'-phosphate + GMP + H(+). It participates in cofactor biosynthesis; adenosylcobalamin biosynthesis; adenosylcobalamin from cob(II)yrinate a,c-diamide: step 7/7. Joins adenosylcobinamide-GDP and alpha-ribazole to generate adenosylcobalamin (Ado-cobalamin). Also synthesizes adenosylcobalamin 5'-phosphate from adenosylcobinamide-GDP and alpha-ribazole 5'-phosphate. This is Adenosylcobinamide-GDP ribazoletransferase from Ectopseudomonas mendocina (strain ymp) (Pseudomonas mendocina).